The primary structure comprises 184 residues: Sec-independent protein translocase protein TatB (184 aa).

Residues 1–21 (MFDIGFSELVLLFVVGLIVLG) form a helical membrane-spanning segment. Positions 149-168 (AEEGEPMLEMGESDFSEDEQ) are enriched in acidic residues. The disordered stretch occupies residues 149-184 (AEEGEPMLEMGESDFSEDEQATASSNETIENIKEKV).

Belongs to the TatB family. As to quaternary structure, the Tat system comprises two distinct complexes: a TatABC complex, containing multiple copies of TatA, TatB and TatC subunits, and a separate TatA complex, containing only TatA subunits. Substrates initially bind to the TatABC complex, which probably triggers association of the separate TatA complex to form the active translocon.

Its subcellular location is the cell inner membrane. Functionally, part of the twin-arginine translocation (Tat) system that transports large folded proteins containing a characteristic twin-arginine motif in their signal peptide across membranes. Together with TatC, TatB is part of a receptor directly interacting with Tat signal peptides. TatB may form an oligomeric binding site that transiently accommodates folded Tat precursor proteins before their translocation. The sequence is that of Sec-independent protein translocase protein TatB from Histophilus somni (strain 129Pt) (Haemophilus somnus).